The primary structure comprises 1259 residues: Clustered mitochondria protein homolog (1259 aa).

Positions 1–27 (MSQTNGNMEHSKETPQSQEVEQLTNGN) are enriched in polar residues. The tract at residues 1–38 (MSQTNGNMEHSKETPQSQEVEQLTNGNHPEEQQEEEEN) is disordered. A Clu domain is found at 324-568 (DITRSQESYL…RVTPLDVMWQ (245 aa)). Composition is skewed to basic and acidic residues over residues 612-628 (AEAEKEKPAESSESKEQ) and 634-647 (TEEKTEESSDQERV). Disordered stretches follow at residues 612-647 (AEAEKEKPAESSESKEQDSEEKTEEKTEESSDQERV) and 881-908 (VVNGANNAAQDEGKKKKKKGADKSPSRA). TPR repeat units follow at residues 982 to 1015 (AKLYHQLSMLYYQTDEKEAAVELARKAVIVTERT), 1024 to 1057 (ILAYLNLSLFEHASGNTKTALVYIKHAMDLWKII), and 1066 to 1099 (ITTMNNAAVMLQHLKQYADSRKWFEASLSVCESL). Disordered stretches follow at residues 1192–1215 (TKVQPQVGQTAPEASGAKNAANAS) and 1229–1259 (EGGDTSSSRSKQKKRAAASNPKLRGSKKSSA).

This sequence belongs to the CLU family. As to quaternary structure, may associate with the eukaryotic translation initiation factor 3 (eIF-3) complex.

Its subcellular location is the cytoplasm. Functionally, mRNA-binding protein involved in proper cytoplasmic distribution of mitochondria. This Aspergillus clavatus (strain ATCC 1007 / CBS 513.65 / DSM 816 / NCTC 3887 / NRRL 1 / QM 1276 / 107) protein is Clustered mitochondria protein homolog.